The sequence spans 342 residues: Ribosomal RNA small subunit methyltransferase C (342 aa).

This sequence belongs to the methyltransferase superfamily. RsmC family. Monomer.

It localises to the cytoplasm. The enzyme catalyses guanosine(1207) in 16S rRNA + S-adenosyl-L-methionine = N(2)-methylguanosine(1207) in 16S rRNA + S-adenosyl-L-homocysteine + H(+). In terms of biological role, specifically methylates the guanine in position 1207 of 16S rRNA in the 30S particle. The protein is Ribosomal RNA small subunit methyltransferase C of Salmonella agona (strain SL483).